We begin with the raw amino-acid sequence, 104 residues long: Large ribosomal subunit protein uL24 (104 aa).

This sequence belongs to the universal ribosomal protein uL24 family. As to quaternary structure, part of the 50S ribosomal subunit.

Its function is as follows. One of two assembly initiator proteins, it binds directly to the 5'-end of the 23S rRNA, where it nucleates assembly of the 50S subunit. One of the proteins that surrounds the polypeptide exit tunnel on the outside of the subunit. This Salmonella paratyphi A (strain ATCC 9150 / SARB42) protein is Large ribosomal subunit protein uL24.